Consider the following 346-residue polypeptide: Phosphoribosylformylglycinamidine cyclo-ligase (346 aa).

It belongs to the AIR synthase family.

It is found in the cytoplasm. It catalyses the reaction 2-formamido-N(1)-(5-O-phospho-beta-D-ribosyl)acetamidine + ATP = 5-amino-1-(5-phospho-beta-D-ribosyl)imidazole + ADP + phosphate + H(+). The protein operates within purine metabolism; IMP biosynthesis via de novo pathway; 5-amino-1-(5-phospho-D-ribosyl)imidazole from N(2)-formyl-N(1)-(5-phospho-D-ribosyl)glycinamide: step 2/2. This is Phosphoribosylformylglycinamidine cyclo-ligase from Bacillus mycoides (strain KBAB4) (Bacillus weihenstephanensis).